The chain runs to 500 residues: Maturase K (500 aa).

It belongs to the intron maturase 2 family. MatK subfamily.

Its subcellular location is the plastid. It is found in the chloroplast. Functionally, usually encoded in the trnK tRNA gene intron. Probably assists in splicing its own and other chloroplast group II introns. The chain is Maturase K from Prunus laurocerasus (Cherry laurel).